Consider the following 113-residue polypeptide: Hydrogenase maturation factor HypA (113 aa).

H2 serves as a coordination point for Ni(2+). Zn(2+) is bound by residues C73, C76, C89, and C92.

Belongs to the HypA/HybF family.

In terms of biological role, involved in the maturation of [NiFe] hydrogenases. Required for nickel insertion into the metal center of the hydrogenase. In Aeromonas salmonicida (strain A449), this protein is Hydrogenase maturation factor HypA.